Reading from the N-terminus, the 159-residue chain is Neuroglobin-1 (159 aa).

One can recognise a Globin domain in the interval 3–151 (KLTEKEKELI…VVAAMSRGWA (149 aa)). Histidine 66 and histidine 98 together coordinate heme b.

Belongs to the globin family. As to quaternary structure, monomer. Homodimers and homotetramers. Mainly monomeric but also detected as part of homodimers and homotetramers.

It is found in the cytoplasm. The protein localises to the cytosol. It localises to the mitochondrion matrix. The enzyme catalyses Fe(III)-heme b-[protein] + nitric oxide + H2O = Fe(II)-heme b-[protein] + nitrite + 2 H(+). Its function is as follows. Monomeric globin with a bis-histidyl six-coordinate heme-iron atom through which it can bind dioxygen, carbon monoxide and nitric oxide. Could help transport oxygen and increase its availability to the metabolically active neuronal tissues, though its low quantity in tissues as well as its high affinity for dioxygen, which may limit its oxygen-releasing ability, argue against it. The ferrous/deoxygenated form exhibits a nitrite reductase activity and it could produce nitric oxide which in turn inhibits cellular respiration in response to hypoxia. In its ferrous/deoxygenated state, it may also exhibit GDI (Guanine nucleotide Dissociation Inhibitor) activity toward heterotrimeric G-alpha proteins, thereby regulating signal transduction to facilitate neuroprotective responses in the wake of hypoxia and associated oxidative stress. The chain is Neuroglobin-1 (ngb1) from Oncorhynchus mykiss (Rainbow trout).